The following is a 122-amino-acid chain: uncharacterized protein (122 aa).

This sequence belongs to the phage O protein family.

This is an uncharacterized protein from Escherichia coli O6:H1 (strain CFT073 / ATCC 700928 / UPEC).